The sequence spans 772 residues: MELKRLGVSWRFLMVLVLILQSLSALDFDPYRVLGVSRTASQADIKKAYKKLAREWHPDKNKDPGAEDRFIQISKAYEILSNEEKRTNYDHYGDAGENQGYQKQQREHRFRHFHENFYFDESFFHFPFNAERRDSGDEKYLLHFSHYVNEVLPESFKRPYLIKITSDWCFSCIHIEPVWKEVVQELEGLGVGIGVVHAGYERRLAHHLGAHSTPSILGVISGKITFFHNAVVHENLRQFVESLLPGNLVEKVTNKNYVRFLSGWQQENKPHALLFGQTPAVPLMYKLTAFAYKDYVSFGYVYVGLRGVEEMTRQYNVNLYTPTMLIFKEHINKPADVIQARGLKKQVIEDFIAQNKYLLASRLTSQRLFHELCPVKRSHRQRKYCVVLLTAETNKVSKPFEAFLSFALANTQDTVRFVHVYSNRQQEFASTLLPDMEAFQGKSGVSILERRNTAGRVVFKTLEDPWTGSESDKFVLLGYLDQLRKDPAFLSSEAVLPDLTDELAPVFFLRWLYSVSDYLSDFWESLLHSNWREMMPLLSLIFSALFILFGTVMVQAFSDSNEERESHPADKEEVPEKAGKTEPSFTKESSSKIPKKGFVEVTELTDVTYTSNLVRLRPGHMNVVLILSNSTKTSLLQKFALEVYTFTGSSSLHFSFLTLDKHREWLEYLLEFAQDAAPIPNQYDKHFMERDYTGYVLALNGHKKYFCLFKPLKTVDEETVASCDPDSSRGKPSCGLGPKPLKGKLSKLSLWMERLLEGSLQRFYIPSWPELD.

Positions 1–25 (MELKRLGVSWRFLMVLVLILQSLSA) are cleaved as a signal peptide. Residues 26-533 (LDFDPYRVLG…ESLLHSNWRE (508 aa)) are Cytoplasmic-facing. In terms of domain architecture, J spans 29–93 (DPYRVLGVSR…EKRTNYDHYG (65 aa)). Residues 119–245 (FDESFFHFPF…LRQFVESLLP (127 aa)) enclose the Thioredoxin domain. Residues 534-554 (MMPLLSLIFSALFILFGTVMV) form a helical; Anchor for type IV membrane protein membrane-spanning segment. Topologically, residues 555–772 (QAFSDSNEER…FYIPSWPELD (218 aa)) are extracellular. The segment at 560-591 (SNEERESHPADKEEVPEKAGKTEPSFTKESSS) is disordered. Positions 561-580 (NEERESHPADKEEVPEKAGK) are enriched in basic and acidic residues. N-linked (GlcNAc...) asparagine glycosylation is present at Asn-629.

It localises to the endoplasmic reticulum membrane. Functionally, plays an important role in regulating the size of autophagosomes during the formation process. The sequence is that of DnaJ homolog subfamily C member 16 (Dnajc16) from Mus musculus (Mouse).